Consider the following 293-residue polypeptide: Small ribosomal subunit protein uS3 (293 aa).

Positions 39 to 107 constitute a KH type-2 domain; sequence VREYLKAKLK…PVAVNIEEVR (69 aa). The interval 210–293 is disordered; the sequence is RNDLPAVETP…PATAADGKGE (84 aa). Residues 219-238 are compositionally biased toward basic and acidic residues; the sequence is PRPEEERRPRGPRRDGRPGG.

This sequence belongs to the universal ribosomal protein uS3 family. Part of the 30S ribosomal subunit. Forms a tight complex with proteins S10 and S14.

Its function is as follows. Binds the lower part of the 30S subunit head. Binds mRNA in the 70S ribosome, positioning it for translation. This is Small ribosomal subunit protein uS3 from Paracidovorax citrulli (strain AAC00-1) (Acidovorax citrulli).